The chain runs to 213 residues: Thymidylate kinase (213 aa).

10-17 (GPDGAGKT) contributes to the ATP binding site.

This sequence belongs to the thymidylate kinase family.

It catalyses the reaction dTMP + ATP = dTDP + ADP. Its function is as follows. Phosphorylation of dTMP to form dTDP in both de novo and salvage pathways of dTTP synthesis. In Limosilactobacillus reuteri (strain DSM 20016) (Lactobacillus reuteri), this protein is Thymidylate kinase.